The chain runs to 434 residues: Methylenetetrahydrofolate--tRNA-(uracil-5-)-methyltransferase TrmFO (434 aa).

8 to 13 (GAGLAG) serves as a coordination point for FAD.

Belongs to the MnmG family. TrmFO subfamily. FAD serves as cofactor.

It localises to the cytoplasm. The catalysed reaction is uridine(54) in tRNA + (6R)-5,10-methylene-5,6,7,8-tetrahydrofolate + NADH + H(+) = 5-methyluridine(54) in tRNA + (6S)-5,6,7,8-tetrahydrofolate + NAD(+). It catalyses the reaction uridine(54) in tRNA + (6R)-5,10-methylene-5,6,7,8-tetrahydrofolate + NADPH + H(+) = 5-methyluridine(54) in tRNA + (6S)-5,6,7,8-tetrahydrofolate + NADP(+). In terms of biological role, catalyzes the folate-dependent formation of 5-methyl-uridine at position 54 (M-5-U54) in all tRNAs. The sequence is that of Methylenetetrahydrofolate--tRNA-(uracil-5-)-methyltransferase TrmFO from Exiguobacterium sibiricum (strain DSM 17290 / CCUG 55495 / CIP 109462 / JCM 13490 / 255-15).